Reading from the N-terminus, the 211-residue chain is Protein-L-isoaspartate O-methyltransferase (211 aa).

Ser60 is an active-site residue.

It belongs to the methyltransferase superfamily. L-isoaspartyl/D-aspartyl protein methyltransferase family.

The protein localises to the cytoplasm. It carries out the reaction [protein]-L-isoaspartate + S-adenosyl-L-methionine = [protein]-L-isoaspartate alpha-methyl ester + S-adenosyl-L-homocysteine. In terms of biological role, catalyzes the methyl esterification of L-isoaspartyl residues in peptides and proteins that result from spontaneous decomposition of normal L-aspartyl and L-asparaginyl residues. It plays a role in the repair and/or degradation of damaged proteins. The sequence is that of Protein-L-isoaspartate O-methyltransferase from Ectopseudomonas mendocina (strain ymp) (Pseudomonas mendocina).